The chain runs to 503 residues: U6 snRNA (guanine-N(2))-methyltransferase THUMPD2 (503 aa).

The THUMP domain occupies 161–266 (CQLEKQIKEE…DIYSVVGIPV (106 aa)).

It belongs to the methyltransferase superfamily. Part of the heterodimeric THUMPD2-TRM112 methyltransferase complex; this complex forms an active tRNA methyltransferase, where TRMT112 acts as an activator of the catalytic subunit THUMPD2. In terms of tissue distribution, expressed in a variety of tissues including brain, colon, gingiva, heart, kidney, liver, lung, placenta, small intestine, spleen and thymus.

Its subcellular location is the nucleus. The catalysed reaction is guanosine in U6 snRNA + S-adenosyl-L-methionine = N(2)-methylguanosine in U6 snRNA + S-adenosyl-L-homocysteine + H(+). Its function is as follows. Catalytic subunit of the THUMPD2-TRM112 methyltransferase complex, that specifically mediates the S-adenosyl-L-methionine-dependent N(2)-methylation of guanosine nucleotides, most probably at position 72 (m2G72), in the U6snRNA of the major spliceosome. This modification in the U6 snRNA affects the constitutive splicing efficiency of introns that have suboptimal splice sites and can impact final mRNA levels. This Homo sapiens (Human) protein is U6 snRNA (guanine-N(2))-methyltransferase THUMPD2.